A 389-amino-acid polypeptide reads, in one-letter code: MGTPAGAGTRPTGAGTVEGVGIPPGLQTDYETLLSRFQEMDSVRFEDFTELWRSMKFATIFCGKMRNLKKNMFTKEALALAWRYFLPPHTFQIRVGALYLLYGLYNTQLCQPKQKIRVALKDWDEVIRFQQDLMNAQHFDAAFVFRKLRLDRAFHFTAMPKLLSCRMKKKVQQTEVTQKFKDPNDRVMKLITSDVLEEMLNVHDHYQNMKHAISADKSMPDRALSLVKEDFFENIKNIVLEHQEWHKERKNPSLKPKLKDGEENGEGSSEEPERCERAVSLAKIKAKAFSAVVPVSKSRRHRQSKLDSSDSDSGSGQVQGRAAKRKRTREPAGPAGRKRSSRSKGNAPNERKEEKSLHLSMPIITEEEEEDMGGVRKAEFTAPKRKRKC.

Residues 1–15 (MGTPAGAGTRPTGAG) show a composition bias toward low complexity. Disordered stretches follow at residues 1-22 (MGTPAGAGTRPTGAGTVEGVGI), 245-276 (WHKERKNPSLKPKLKDGEENGEGSSEEPERCE), and 290-389 (SAVV…KRKC). The tract at residues 20 to 187 (VGIPPGLQTD…QKFKDPNDRV (168 aa)) is SNAPC3-binding. The SNAPC4-binding stretch occupies residues 183 to 287 (PNDRVMKLIT…AVSLAKIKAK (105 aa)). A compositionally biased stretch (basic and acidic residues) spans 245–262 (WHKERKNPSLKPKLKDGE). Serine 308 and serine 309 each carry phosphoserine.

Part of the SNAPc complex composed of 5 subunits: SNAPC1, SNAPC2, SNAPC3, SNAPC4 and SNAPC5. SNAPC1 interacts with SNAPC3, SNAPC4 and TBP.

It localises to the nucleus. Part of the SNAPc complex required for the transcription of both RNA polymerase II and III small-nuclear RNA genes. Binds to the proximal sequence element (PSE), a non-TATA-box basal promoter element common to these 2 types of genes. Recruits TBP and BRF2 to the U6 snRNA TATA box. This is snRNA-activating protein complex subunit 1 (Snapc1) from Mus musculus (Mouse).